The sequence spans 385 residues: S-adenosylmethionine synthase (385 aa).

H16 lines the ATP pocket. D18 serves as a coordination point for Mg(2+). Residue E44 coordinates K(+). L-methionine-binding residues include E57 and Q100. The interval 100–110 is flexible loop; sequence QSPDINQGVDR. ATP is bound by residues 164 to 166, 230 to 231, D239, 245 to 246, A262, and K266; these read DGK, KF, and RK. D239 contacts L-methionine. K270 serves as a coordination point for L-methionine.

Belongs to the AdoMet synthase family. Homotetramer; dimer of dimers. Requires Mg(2+) as cofactor. It depends on K(+) as a cofactor.

It is found in the cytoplasm. The catalysed reaction is L-methionine + ATP + H2O = S-adenosyl-L-methionine + phosphate + diphosphate. It functions in the pathway amino-acid biosynthesis; S-adenosyl-L-methionine biosynthesis; S-adenosyl-L-methionine from L-methionine: step 1/1. Its function is as follows. Catalyzes the formation of S-adenosylmethionine (AdoMet) from methionine and ATP. The overall synthetic reaction is composed of two sequential steps, AdoMet formation and the subsequent tripolyphosphate hydrolysis which occurs prior to release of AdoMet from the enzyme. The sequence is that of S-adenosylmethionine synthase from Helicobacter acinonychis (strain Sheeba).